A 332-amino-acid chain; its full sequence is tRNA uridine(34) hydroxylase (332 aa).

Residues 123 to 217 enclose the Rhodanese domain; that stretch reads SDPEVLLVDT…YLEEVKQEES (95 aa). Cysteine 177 acts as the Cysteine persulfide intermediate in catalysis. Positions 302-332 are disordered; that stretch reads SDVGAVIQSRRDNKENLKKSQVKLNNKKYNK. The segment covering 310–319 has biased composition (basic and acidic residues); it reads SRRDNKENLK.

Belongs to the TrhO family.

The enzyme catalyses uridine(34) in tRNA + AH2 + O2 = 5-hydroxyuridine(34) in tRNA + A + H2O. Catalyzes oxygen-dependent 5-hydroxyuridine (ho5U) modification at position 34 in tRNAs. The polypeptide is tRNA uridine(34) hydroxylase (Shewanella woodyi (strain ATCC 51908 / MS32)).